The primary structure comprises 92 residues: Small ribosomal subunit protein uS19 (92 aa).

The protein belongs to the universal ribosomal protein uS19 family.

In terms of biological role, protein S19 forms a complex with S13 that binds strongly to the 16S ribosomal RNA. The chain is Small ribosomal subunit protein uS19 from Staphylococcus carnosus (strain TM300).